A 387-amino-acid polypeptide reads, in one-letter code: Putative glutamate--cysteine ligase 2 (387 aa).

Belongs to the glutamate--cysteine ligase type 2 family. YbdK subfamily.

It carries out the reaction L-cysteine + L-glutamate + ATP = gamma-L-glutamyl-L-cysteine + ADP + phosphate + H(+). Its function is as follows. ATP-dependent carboxylate-amine ligase which exhibits weak glutamate--cysteine ligase activity. The protein is Putative glutamate--cysteine ligase 2 of Pseudomonas fluorescens (strain ATCC BAA-477 / NRRL B-23932 / Pf-5).